The primary structure comprises 311 residues: Taste receptor type 2 member 9 (311 aa).

Topologically, residues 1-9 (MPSTIEAIY) are extracellular. Residues 10-32 (IILIAGELTIGIWGNGFIVLVNC) traverse the membrane as a helical segment. The Cytoplasmic portion of the chain corresponds to 33 to 52 (IDWLKRRDVSLIDIILISLA). Residues 53–72 (ISRICLLCVISLDGFFILLF) traverse the membrane as a helical segment. Topologically, residues 73-86 (PGTYDINVLESIMD) are extracellular. The chain crosses the membrane as a helical span at residues 87-109 (AVWTFANNSSLWFTSCLSIFYLL). Residues 110-128 (KIANISHPFFFWLKLKINK) lie on the Cytoplasmic side of the membrane. The chain crosses the membrane as a helical span at residues 129–146 (VILAILLGSFLISLIISF). Over 147-179 (PINGXWYHLFKVSHEENITWAFKVSTIPGAFKQ) the chain is Extracellular. N-linked (GlcNAc...) asparagine glycosylation is present at asparagine 163. Residues 180-202 (LTLNLGAMVPFMLCLISFFLLLF) traverse the membrane as a helical segment. Topologically, residues 203-233 (SLVRHTKQIQLHATGLRDPSTEAHMRAIKAV) are cytoplasmic. A helical transmembrane segment spans residues 234–256 (IIFLLLLIVYYPVFLVMTSSTLI). Topologically, residues 257 to 260 (PQGK) are extracellular. Residues 261-283 (LVLMIGDIVTVIFPSSHSFILIM) form a helical membrane-spanning segment. Topologically, residues 284–311 (GNSKLREAFLKMLRFVKGFLRRRKPFGP) are cytoplasmic.

It belongs to the G-protein coupled receptor T2R family.

The protein resides in the membrane. In terms of biological role, gustducin-coupled receptor implicated in the perception of bitter compounds in the oral cavity and the gastrointestinal tract. Signals through PLCB2 and the calcium-regulated cation channel TRPM5. This Papio hamadryas (Hamadryas baboon) protein is Taste receptor type 2 member 9 (TAS2R9).